The following is a 351-amino-acid chain: Adenine deaminase (351 aa).

3 residues coordinate Zn(2+): His-20, His-22, and His-200. Residue Glu-203 is the Proton donor of the active site. A Zn(2+)-binding site is contributed by Asp-281. Asp-282 provides a ligand contact to substrate.

This sequence belongs to the metallo-dependent hydrolases superfamily. Adenosine and AMP deaminases family. Adenine deaminase type 2 subfamily. The cofactor is Zn(2+).

The enzyme catalyses adenine + H2O + H(+) = hypoxanthine + NH4(+). Catalyzes the hydrolytic deamination of adenine to hypoxanthine. Plays an important role in the purine salvage pathway and in nitrogen catabolism. The sequence is that of Adenine deaminase from Cupriavidus necator (strain ATCC 17699 / DSM 428 / KCTC 22496 / NCIMB 10442 / H16 / Stanier 337) (Ralstonia eutropha).